The chain runs to 335 residues: Gibberellin 2-beta-dioxygenase 3 (335 aa).

Residues 175–278 form the Fe2OG dioxygenase domain; the sequence is ESDSCLRMNH…RISMIYFAGP (104 aa). Fe cation contacts are provided by His202, Asp204, and His259. Arg269 is an active-site residue.

The protein belongs to the iron/ascorbate-dependent oxidoreductase family. GA2OX subfamily. It depends on Fe(2+) as a cofactor. As to expression, not expressed in the apex.

The enzyme catalyses gibberellin A1 + 2-oxoglutarate + O2 = gibberellin A8 + succinate + CO2. It functions in the pathway plant hormone biosynthesis; gibberellin biosynthesis. In terms of biological role, catalyzes the 2-beta-hydroxylation of several biologically active gibberellins, leading to the homeostatic regulation of their endogenous level. Catabolism of gibberellins (GAs) plays a central role in plant development. Converts GA9/GA20 to GA51/GA29 and GA4/GA1 to GA34/GA8. This is Gibberellin 2-beta-dioxygenase 3 (GA2OX3) from Arabidopsis thaliana (Mouse-ear cress).